Consider the following 479-residue polypeptide: MAQHTVYFPDAFLTQMREAMPSTLSFDDFLAACQRPLRRSIRVNTLKTSVADFLRLTAPYGWTLTPIPWCEEGFWIERDDEDALPLGSTAEHLSGLFYIQEASSMLPVAALFADGNAPQRVMDVAAAPGSKTTQIAARMNNEGAILANEFSASRVKVLHANISRCGISNVALTHFDGRVFGAALPEMFDAILLDAPCSGEGVVRKDPDALKNWSPESNQEIAATQRELIDSAFHALRSGGTLVYSTCTLNREENESVCLWLKETYPDAVEFLPLGDLFPGANKALTEEGFLHVFPQIYDCEGFFVARLRKTQAIPALPTPKYKVGNFPFSPVKDREAAQIRQAAASVGLNWDGNLRLWQRDKEVWLFPVGIEALIGKVRFSRLGIKLAETHNKGYRWQHEAVIALASPDNENAFELTPQEAEEWYRGRDVYPQAAPVADDVLVTFQHQPIGLAKRIGSRLKNSYPRELVRDGKLFTSNA.

S-adenosyl-L-methionine contacts are provided by residues 125 to 131 (AAAPGSK), Glu-149, Asp-176, and Asp-194. Residue Cys-247 is the Nucleophile of the active site.

Belongs to the class I-like SAM-binding methyltransferase superfamily. RsmB/NOP family.

The protein resides in the cytoplasm. It carries out the reaction cytidine(1407) in 16S rRNA + S-adenosyl-L-methionine = 5-methylcytidine(1407) in 16S rRNA + S-adenosyl-L-homocysteine + H(+). Functionally, specifically methylates the cytosine at position 1407 (m5C1407) of 16S rRNA. The polypeptide is Ribosomal RNA small subunit methyltransferase F (Escherichia coli O157:H7 (strain EC4115 / EHEC)).